The following is a 250-amino-acid chain: Peptidyl-tRNA hydrolase (250 aa).

Tyrosine 14 is a tRNA binding site. Histidine 19 (proton acceptor) is an active-site residue. Positions 64, 66, and 112 each coordinate tRNA. The segment at 192 to 250 (MGDGNQRPGGVKTDPAQLEKAPPKAQSHIRQARQNQKKPNIPESGPMAEMLKKLLGKKD) is disordered. The span at 219–229 (HIRQARQNQKK) shows a compositional bias: polar residues. The span at 241 to 250 (MLKKLLGKKD) shows a compositional bias: basic and acidic residues.

It belongs to the PTH family. Monomer.

It localises to the cytoplasm. It carries out the reaction an N-acyl-L-alpha-aminoacyl-tRNA + H2O = an N-acyl-L-amino acid + a tRNA + H(+). In terms of biological role, hydrolyzes ribosome-free peptidyl-tRNAs (with 1 or more amino acids incorporated), which drop off the ribosome during protein synthesis, or as a result of ribosome stalling. Catalyzes the release of premature peptidyl moieties from peptidyl-tRNA molecules trapped in stalled 50S ribosomal subunits, and thus maintains levels of free tRNAs and 50S ribosomes. In Brucella canis (strain ATCC 23365 / NCTC 10854 / RM-666), this protein is Peptidyl-tRNA hydrolase.